The following is a 147-amino-acid chain: uncharacterized protein (147 aa).

Residues Ile69–Ile89 form a helical membrane-spanning segment.

The protein resides in the membrane. This is an uncharacterized protein from Saccharomyces cerevisiae (strain ATCC 204508 / S288c) (Baker's yeast).